We begin with the raw amino-acid sequence, 179 residues long: MKKNLTNIYLIGPMGAGKTSVGSQLAKLTKRILYDSDKEIEKRTGADIAWIFEMEGEAGFRRREREMIEALCKLDNIILATGGGVVLDEKNRQQISETGVVIYLTASIDTQLKRIGQKGEMRRPLFIKNNSKEKLQQLNEIRKPLYQAMADLVYPTDDLNPRQLATQILVDIKQTYSDL.

15–20 (GAGKTS) is a binding site for ATP. T19 serves as a coordination point for Mg(2+). Residues D37, R61, and G83 each coordinate substrate. ATP is bound at residue R122. Position 142 (R142) interacts with substrate.

It belongs to the shikimate kinase family. In terms of assembly, monomer. Mg(2+) is required as a cofactor.

The protein resides in the cytoplasm. The enzyme catalyses shikimate + ATP = 3-phosphoshikimate + ADP + H(+). It participates in metabolic intermediate biosynthesis; chorismate biosynthesis; chorismate from D-erythrose 4-phosphate and phosphoenolpyruvate: step 5/7. Its function is as follows. Catalyzes the specific phosphorylation of the 3-hydroxyl group of shikimic acid using ATP as a cosubstrate. In Coxiella burnetii (strain Dugway 5J108-111), this protein is Shikimate kinase.